The chain runs to 354 residues: Uroporphyrinogen decarboxylase (354 aa).

Substrate is bound by residues 27–31 (RQAGR), Asp77, Tyr154, Thr209, and His327.

Belongs to the uroporphyrinogen decarboxylase family. As to quaternary structure, homodimer.

The protein localises to the cytoplasm. It carries out the reaction uroporphyrinogen III + 4 H(+) = coproporphyrinogen III + 4 CO2. It participates in porphyrin-containing compound metabolism; protoporphyrin-IX biosynthesis; coproporphyrinogen-III from 5-aminolevulinate: step 4/4. Catalyzes the decarboxylation of four acetate groups of uroporphyrinogen-III to yield coproporphyrinogen-III. The protein is Uroporphyrinogen decarboxylase of Pectobacterium carotovorum subsp. carotovorum (strain PC1).